Here is a 648-residue protein sequence, read N- to C-terminus: Biosynthetic arginine decarboxylase (648 aa).

Lysine 109 is subject to N6-(pyridoxal phosphate)lysine. 291-301 (IDVGGGLGIDF) provides a ligand contact to substrate.

Belongs to the Orn/Lys/Arg decarboxylase class-II family. SpeA subfamily. Mg(2+) serves as cofactor. It depends on pyridoxal 5'-phosphate as a cofactor.

It carries out the reaction L-arginine + H(+) = agmatine + CO2. The protein operates within amine and polyamine biosynthesis; agmatine biosynthesis; agmatine from L-arginine: step 1/1. In terms of biological role, catalyzes the biosynthesis of agmatine from arginine. In Prochlorococcus marinus (strain MIT 9301), this protein is Biosynthetic arginine decarboxylase.